We begin with the raw amino-acid sequence, 416 residues long: Serine hydroxymethyltransferase (416 aa).

(6S)-5,6,7,8-tetrahydrofolate is bound by residues Leu-121 and 125–127; that span reads GHL. Residue Lys-230 is modified to N6-(pyridoxal phosphate)lysine. Residue 354 to 356 participates in (6S)-5,6,7,8-tetrahydrofolate binding; the sequence is SPF.

Belongs to the SHMT family. Homodimer. The cofactor is pyridoxal 5'-phosphate.

It is found in the cytoplasm. The catalysed reaction is (6R)-5,10-methylene-5,6,7,8-tetrahydrofolate + glycine + H2O = (6S)-5,6,7,8-tetrahydrofolate + L-serine. The protein operates within one-carbon metabolism; tetrahydrofolate interconversion. It participates in amino-acid biosynthesis; glycine biosynthesis; glycine from L-serine: step 1/1. Its function is as follows. Catalyzes the reversible interconversion of serine and glycine with tetrahydrofolate (THF) serving as the one-carbon carrier. This reaction serves as the major source of one-carbon groups required for the biosynthesis of purines, thymidylate, methionine, and other important biomolecules. Also exhibits THF-independent aldolase activity toward beta-hydroxyamino acids, producing glycine and aldehydes, via a retro-aldol mechanism. The chain is Serine hydroxymethyltransferase from Prochlorococcus marinus (strain MIT 9211).